The sequence spans 372 residues: Cytochrome b (372 aa).

4 helical membrane passes run 25–45, 69–90, 105–125, and 170–190; these read FGSM…FLAI, WMMQ…YIHI, WLSG…GYVL, and FFAL…IHIM. Residues His75 and His89 each contribute to the heme b site. The heme b site is built by His174 and His188. Residue His193 participates in a ubiquinone binding. A run of 4 helical transmembrane segments spans residues 218–238, 280–300, 312–332, and 339–358; these read HKDM…MSFM, LGGT…PFTH, LMQF…WAAT, and FTTI…IMNP.

The protein belongs to the cytochrome b family. As to quaternary structure, the cytochrome bc1 complex contains 3 respiratory subunits (MT-CYB, CYC1 and UQCRFS1), 2 core proteins (UQCRC1 and UQCRC2) and probably 6 low-molecular weight proteins. Requires heme b as cofactor.

The protein localises to the mitochondrion inner membrane. Its function is as follows. Component of the ubiquinol-cytochrome c reductase complex (complex III or cytochrome b-c1 complex) that is part of the mitochondrial respiratory chain. The b-c1 complex mediates electron transfer from ubiquinol to cytochrome c. Contributes to the generation of a proton gradient across the mitochondrial membrane that is then used for ATP synthesis. This Pantherophis obsoletus (Black ratsnake) protein is Cytochrome b (MT-CYB).